Consider the following 247-residue polypeptide: Carboxy-S-adenosyl-L-methionine synthase (247 aa).

Residues Tyr-39, 89 to 90 (DN), 117 to 118 (DI), Asn-132, and Arg-199 each bind S-adenosyl-L-methionine.

It belongs to the class I-like SAM-binding methyltransferase superfamily. Cx-SAM synthase family. As to quaternary structure, homodimer.

The enzyme catalyses prephenate + S-adenosyl-L-methionine = carboxy-S-adenosyl-L-methionine + 3-phenylpyruvate + H2O. Functionally, catalyzes the conversion of S-adenosyl-L-methionine (SAM) to carboxy-S-adenosyl-L-methionine (Cx-SAM). The protein is Carboxy-S-adenosyl-L-methionine synthase of Sodalis glossinidius (strain morsitans).